The chain runs to 186 residues: Zein-alpha PZ19.1 (186 aa).

The N-terminal stretch at 1–21 is a signal peptide; it reads MAAKIFCLIMLLGLSASAATA.

The protein belongs to the zein family.

In terms of biological role, zeins are major seed storage proteins. The polypeptide is Zein-alpha PZ19.1 (Zea mays (Maize)).